We begin with the raw amino-acid sequence, 66 residues long: Large ribosomal subunit protein bL35 (66 aa).

The protein belongs to the bacterial ribosomal protein bL35 family.

This is Large ribosomal subunit protein bL35 from Cereibacter sphaeroides (strain ATCC 17029 / ATH 2.4.9) (Rhodobacter sphaeroides).